We begin with the raw amino-acid sequence, 155 residues long: Conopressin/neurophysin (155 aa).

Residues M1 to A26 form the signal peptide. C27 and C32 form a disulfide bridge. G35 carries the post-translational modification Glycine amide. 7 cysteine pairs are disulfide-bonded: C50-C94, C53-C67, C61-C84, C68-C74, C101-C115, C109-C127, and C116-C121. N-linked (GlcNAc...) asparagine glycosylation is present at N88.

It belongs to the vasopressin/oxytocin family. Seven disulfide bonds are present in neurophysin.

It localises to the secreted. The protein is Conopressin/neurophysin of Lymnaea stagnalis (Great pond snail).